Consider the following 694-residue polypeptide: Beta-galactosidase (694 aa).

A disordered region spans residues 1 to 31 (MGKRFPSGWFSPRVHPPRRQRSPMTNQATPG). Residues 22–31 (SPMTNQATPG) are compositionally biased toward polar residues. Residues arginine 144 and asparagine 182 each coordinate substrate. Glutamate 183 acts as the Proton donor in catalysis. Glutamate 341 serves as the catalytic Nucleophile. Substrate contacts are provided by residues tryptophan 349 and 389–392 (EKFH).

It belongs to the glycosyl hydrolase 42 family. As to quaternary structure, homotrimer.

It catalyses the reaction Hydrolysis of terminal non-reducing beta-D-galactose residues in beta-D-galactosides.. Strongly inhibited by glucose. No activity is lost during treatment with 100 mM EDTA after 2 hours. Activity not considerably affected by metal ions (5 mM), including Na(+), K(+), Mg(2+), Co(2+) and Ca(2+). Completely inhibited by Cu(2+) and Zn(2+) (5 mM) and is strongly inhibited by Mn(2+) (11%), Fe(2+) (25%) and Ni(2+) (38%) in comparison with the activity in the absence of cations (100%). Activity not affected by dithiothreitol, beta-mercaptoethanol and L-cysteine whereas reduced glutathione almost completely inactivates it. With ONPG as substrate, the addition of ethanol up to 20% still slightly stimulates activity. The activity increases up to 120% in the presence of 8% v/v ethanol at pH 5.5. Hydrolyzes p-nitrophenyl-beta-D-galactopyranoside (PNPG), o-nitrophenyl-beta-D-galactopyranoside (ONPG) and chromogen 5-bromo-4-chloro-3-indolyl-beta-D-galactopyranoside (X-gal), with highest activity against PNPG. Also acts on p-nitrophenyl-beta-D-glucopyranoside (PNPGlu) and o-nitrophenyl-beta-D-glucopyranoside (ONPGlu), but with significantly lower activity. This chain is Beta-galactosidase, found in Arthrobacter sp.